The chain runs to 72 residues: Translation initiation factor IF-1 (72 aa).

The S1-like domain maps to 1-72; the sequence is MAKDDVIEID…DKGRITYRYK (72 aa).

This sequence belongs to the IF-1 family. In terms of assembly, component of the 30S ribosomal translation pre-initiation complex which assembles on the 30S ribosome in the order IF-2 and IF-3, IF-1 and N-formylmethionyl-tRNA(fMet); mRNA recruitment can occur at any time during PIC assembly.

Its subcellular location is the cytoplasm. Functionally, one of the essential components for the initiation of protein synthesis. Stabilizes the binding of IF-2 and IF-3 on the 30S subunit to which N-formylmethionyl-tRNA(fMet) subsequently binds. Helps modulate mRNA selection, yielding the 30S pre-initiation complex (PIC). Upon addition of the 50S ribosomal subunit IF-1, IF-2 and IF-3 are released leaving the mature 70S translation initiation complex. The protein is Translation initiation factor IF-1 of Campylobacter curvus (strain 525.92).